We begin with the raw amino-acid sequence, 357 residues long: 3-isopropylmalate dehydrogenase (357 aa).

Residue 76 to 89 coordinates NAD(+); sequence GPKWDDLPSEKRPE. 4 residues coordinate substrate: arginine 96, arginine 106, arginine 135, and aspartate 224. Aspartate 224, aspartate 248, and aspartate 252 together coordinate Mg(2+). An NAD(+)-binding site is contributed by 282 to 294; it reads GSAPDIAGQDKAN.

The protein belongs to the isocitrate and isopropylmalate dehydrogenases family. LeuB type 1 subfamily. In terms of assembly, homodimer. The cofactor is Mg(2+). Mn(2+) serves as cofactor.

The protein resides in the cytoplasm. The catalysed reaction is (2R,3S)-3-isopropylmalate + NAD(+) = 4-methyl-2-oxopentanoate + CO2 + NADH. The protein operates within amino-acid biosynthesis; L-leucine biosynthesis; L-leucine from 3-methyl-2-oxobutanoate: step 3/4. Catalyzes the oxidation of 3-carboxy-2-hydroxy-4-methylpentanoate (3-isopropylmalate) to 3-carboxy-4-methyl-2-oxopentanoate. The product decarboxylates to 4-methyl-2 oxopentanoate. In Nitratidesulfovibrio vulgaris (strain ATCC 29579 / DSM 644 / CCUG 34227 / NCIMB 8303 / VKM B-1760 / Hildenborough) (Desulfovibrio vulgaris), this protein is 3-isopropylmalate dehydrogenase.